Reading from the N-terminus, the 71-residue chain is Small ribosomal subunit protein bS21 (71 aa).

The protein belongs to the bacterial ribosomal protein bS21 family.

This is Small ribosomal subunit protein bS21 from Blochmanniella floridana.